Reading from the N-terminus, the 519-residue chain is Probable U3 small nucleolar RNA-associated protein 18 (519 aa).

9 WD repeats span residues 26–66 (DKEN…MFDT), 71–111 (GAKD…RLMI), 216–254 (SHSGIRCMSIHPYFPLLLTCGFDRTLRIYQLDGKVNPLV), 259–298 (LRSSALQTALFHPDGKRVIAAGRRKYMYIWDLESAQVQKV), 306–345 (NFQPSMERFHVDPTGKYIALEGRSGHINLLHALTGQFATS), 347–386 (KIEGVLSDVLFTSDGSEMLVLSYGAEVWHFNVEQRSVVRR), 390–429 (QDGVSTTHFCLDPSNKYLAIGSKSGIVNIYDLQTSNADAA), 438–479 (NITF…VFRN), and 485–519 (TPLGRVTCLAFGKGGELCVGNEAGRVGLWKLAHYD).

It belongs to the WD repeat UTP18 family. In terms of assembly, component of the ribosomal small subunit (SSU) processome.

The protein resides in the nucleus. It is found in the nucleolus. Involved in nucleolar processing of pre-18S ribosomal RNA. In Schizosaccharomyces pombe (strain 972 / ATCC 24843) (Fission yeast), this protein is Probable U3 small nucleolar RNA-associated protein 18.